Here is a 366-residue protein sequence, read N- to C-terminus: Chorismate synthase (366 aa).

Positions 48 and 54 each coordinate NADP(+). FMN-binding positions include 125–127 (RSS), 238–239 (NA), G278, 293–297 (KPTSS), and R319.

This sequence belongs to the chorismate synthase family. In terms of assembly, homotetramer. Requires FMNH2 as cofactor.

The enzyme catalyses 5-O-(1-carboxyvinyl)-3-phosphoshikimate = chorismate + phosphate. It functions in the pathway metabolic intermediate biosynthesis; chorismate biosynthesis; chorismate from D-erythrose 4-phosphate and phosphoenolpyruvate: step 7/7. Its function is as follows. Catalyzes the anti-1,4-elimination of the C-3 phosphate and the C-6 proR hydrogen from 5-enolpyruvylshikimate-3-phosphate (EPSP) to yield chorismate, which is the branch point compound that serves as the starting substrate for the three terminal pathways of aromatic amino acid biosynthesis. This reaction introduces a second double bond into the aromatic ring system. The chain is Chorismate synthase from Thiobacillus denitrificans (strain ATCC 25259 / T1).